The following is a 197-amino-acid chain: Probable nicotinate-nucleotide adenylyltransferase (197 aa).

It belongs to the NadD family.

It carries out the reaction nicotinate beta-D-ribonucleotide + ATP + H(+) = deamido-NAD(+) + diphosphate. It participates in cofactor biosynthesis; NAD(+) biosynthesis; deamido-NAD(+) from nicotinate D-ribonucleotide: step 1/1. Functionally, catalyzes the reversible adenylation of nicotinate mononucleotide (NaMN) to nicotinic acid adenine dinucleotide (NaAD). This is Probable nicotinate-nucleotide adenylyltransferase from Porphyromonas gingivalis (strain ATCC 33277 / DSM 20709 / CIP 103683 / JCM 12257 / NCTC 11834 / 2561).